A 302-amino-acid chain; its full sequence is MRMNMSDFATFFAVARNQSFRAAGDELGLSSSAISHSIKTLEQRLKIRLFNRTTRSVSLTEAGSNLYERLRPAFDEIQIMLDEMNDFRLTPTGTLKINAARVAARIFLMSLLVGFTREYPDIKVELTTDDSLVDIVQQGFDAGVRLSCIVEKDMISVAIGPPVKLCVAATPEYFARYGKPRHPHDLLNHQCVVFRYPSGKPFHWQFAKELEIAVAGNIILDDVDAELEAVLMGAGIGYLLYEQIKEYLDTGRLECVLEDWSTERPGFQIYYPNRQYMSCGLRAFLDYVKTGQICQSQRHRPQ.

An HTH lysR-type domain is found at 1 to 60; the sequence is MRMNMSDFATFFAVARNQSFRAAGDELGLSSSAISHSIKTLEQRLKIRLFNRTTRSVSLT. The H-T-H motif DNA-binding region spans 20–40; sequence FRAAGDELGLSSSAISHSIKT.

This sequence belongs to the LysR transcriptional regulatory family.

This is an uncharacterized protein from Escherichia coli (strain K12).